Consider the following 327-residue polypeptide: Mitochondrial coenzyme A transporter SLC25A42 (327 aa).

Solcar repeat units follow at residues 34–120 (KSVL…YKKL), 132–217 (LTPI…LKKL), and 227–315 (PYTF…TQIL). The next 6 membrane-spanning stretches (helical) occupy residues 36-56 (VLNS…AVAP), 92-112 (LWRG…IQFC), 138-158 (LLAG…LDLV), 192-209 (GFTP…ISFF), 233-253 (LLFG…LDVV), and 296-316 (VKGP…QILL).

The protein belongs to the mitochondrial carrier (TC 2.A.29) family.

The protein resides in the mitochondrion inner membrane. The catalysed reaction is ADP(out) + CoA(in) = ADP(in) + CoA(out). It catalyses the reaction 3'-dephospho-CoA(in) + ADP(out) = 3'-dephospho-CoA(out) + ADP(in). The enzyme catalyses adenosine 3',5'-bisphosphate(in) + ADP(out) = adenosine 3',5'-bisphosphate(out) + ADP(in). It carries out the reaction AMP(in) + ADP(out) = AMP(out) + ADP(in). The catalysed reaction is dADP(in) + ADP(out) = dADP(out) + ADP(in). It catalyses the reaction ADP(in) + ATP(out) = ADP(out) + ATP(in). Its function is as follows. Mitochondrial carrier mediating the transport of coenzyme A (CoA) in mitochondria in exchange for intramitochondrial (deoxy)adenine nucleotides and adenosine 3',5'-diphosphate. In Xenopus laevis (African clawed frog), this protein is Mitochondrial coenzyme A transporter SLC25A42 (slc25a42).